The following is an 890-amino-acid chain: Alanine--tRNA ligase (890 aa).

Residues His564, His568, Cys677, and His681 each contribute to the Zn(2+) site.

It belongs to the class-II aminoacyl-tRNA synthetase family. Requires Zn(2+) as cofactor.

Its subcellular location is the cytoplasm. It carries out the reaction tRNA(Ala) + L-alanine + ATP = L-alanyl-tRNA(Ala) + AMP + diphosphate. Functionally, catalyzes the attachment of alanine to tRNA(Ala) in a two-step reaction: alanine is first activated by ATP to form Ala-AMP and then transferred to the acceptor end of tRNA(Ala). Also edits incorrectly charged Ser-tRNA(Ala) and Gly-tRNA(Ala) via its editing domain. In Rhodopseudomonas palustris (strain BisB18), this protein is Alanine--tRNA ligase.